The sequence spans 20 residues: M-poneritoxin-Ng1f (20 aa).

Lys-20 carries the lysine amide modification.

As to expression, expressed by the venom gland.

The protein resides in the secreted. Its subcellular location is the target cell membrane. Has activity against Gram-positive bacteria. Has insecticidal and hemolytic activities. May act by disrupting the integrity of the bacterial cell membrane. This Neoponera goeldii (Ponerine ant) protein is M-poneritoxin-Ng1f.